Reading from the N-terminus, the 151-residue chain is Large ribosomal subunit protein bL9 (151 aa).

It belongs to the bacterial ribosomal protein bL9 family.

Its function is as follows. Binds to the 23S rRNA. This chain is Large ribosomal subunit protein bL9, found in Prochlorococcus marinus (strain MIT 9312).